The sequence spans 611 residues: Menin (611 aa).

The tract at residues 214–390 (GVAERSWLYL…SLLETGEERT (177 aa)) is interaction with FANCD2. Residues 460–553 (REAEAAEAEE…SPPPEGPVLT (94 aa)) form a disordered region. Over residues 484–500 (RRESKPEEPPPPKKPAL) the composition is skewed to basic and acidic residues. Phosphoserine occurs at positions 487 and 544. T595 bears the Phosphothreonine mark.

As to quaternary structure, component of the MLL-HCF complex, at least composed of KMT2A/MLL1, MEN1, ASH2L, RBBP5, DPY30, WDR5, HCFC1 and HCFC2. Component of the menin-associated histone methyltransferase complex, at least composed of KMT2B/MLL4, MEN1, ASH2L, RBBP5, DPY30 and WDR5. Interacts with POLR2B. Interacts with POLR2A phosphorylated at 'Ser-5', but not with the unphosphorylated, nor 'Ser-2' phosphorylated POLR2A forms. Interacts with FANCD2 and DBF4. Interacts with SMAD3, but not with SMAD2, nor SMAD4. Directly interacts with NFKB1, NFKB2 and RELA. Interacts with JUND (via MBM motif); inhibits the interaction of JUND with MAPK10 and the phosphorylation of JUND by MAP kinases MAPK8 and MAPK10. Interacts with KMT2A (via MBM motif). The KMT2A-MEN1 complex interacts with PSIP1 with a greater affinity as MEN1 enhances interaction of KMT2A with PSIP1. Widely expressed, with high levels in hippocampus, cerebral cortex, testis and thymus (at protein level). Also expressed at high levels in pancreatic islets, ovary and bone marrow. In the brain, highest expression in hippocampus pyramidal nerve cells (at protein level). In the testis, may be expressed in spermatogonia (at protein level). Low expression, if any, in skeletal muscle.

It is found in the nucleus. Functionally, essential component of a MLL/SET1 histone methyltransferase (HMT) complex, a complex that specifically methylates 'Lys-4' of histone H3 (H3K4). Functions as a transcriptional regulator. Binds to the TERT promoter and represses telomerase expression. Plays a role in TGFB1-mediated inhibition of cell-proliferation, possibly regulating SMAD3 transcriptional activity. Represses JUND-mediated transcriptional activation on AP1 sites, as well as that mediated by NFKB subunit RELA. Positively regulates HOXC8 and HOXC6 gene expression. May be involved in normal hematopoiesis through the activation of HOXA9 expression. May be involved in DNA repair. This is Menin (Men1) from Mus musculus (Mouse).